The following is a 321-amino-acid chain: Type 3 secretion system translocon protein SctB (321 aa).

A helical membrane pass occupies residues 99–119 (AALIGGAISSVLGILGSFAAI).

Belongs to the SctB/EspB family. As to quaternary structure, the core secretion machinery of the T3SS is composed of approximately 20 different proteins, including cytoplasmic components, a base, an export apparatus and a needle. This subunit is involved in the formation of a pore, called the translocon, in host membrane.

Its subcellular location is the secreted. It localises to the cell surface. The protein localises to the host membrane. In terms of biological role, component of the type III secretion system (T3SS), also called injectisome, which is used to inject bacterial effector proteins into eukaryotic host cells. EspD and EspB are inserted into the host membrane where they form a pore and allow the translocation of effector proteins into the cytosol of target cells. Necessary for intimate attachment to epithelial cells. The protein is Type 3 secretion system translocon protein SctB of Escherichia coli O127:H6 (strain E2348/69 / EPEC).